The sequence spans 159 residues: 2-C-methyl-D-erythritol 2,4-cyclodiphosphate synthase (159 aa).

Asp-10 and His-12 together coordinate a divalent metal cation. 4-CDP-2-C-methyl-D-erythritol 2-phosphate-binding positions include 10 to 12 and 36 to 37; these read DVH and HS. His-44 is a binding site for a divalent metal cation. Residues 58–60 and Arg-144 contribute to the 4-CDP-2-C-methyl-D-erythritol 2-phosphate site; that span reads DIG.

Belongs to the IspF family. Homotrimer. The cofactor is a divalent metal cation.

The enzyme catalyses 4-CDP-2-C-methyl-D-erythritol 2-phosphate = 2-C-methyl-D-erythritol 2,4-cyclic diphosphate + CMP. Its pathway is isoprenoid biosynthesis; isopentenyl diphosphate biosynthesis via DXP pathway; isopentenyl diphosphate from 1-deoxy-D-xylulose 5-phosphate: step 4/6. Involved in the biosynthesis of isopentenyl diphosphate (IPP) and dimethylallyl diphosphate (DMAPP), two major building blocks of isoprenoid compounds. Catalyzes the conversion of 4-diphosphocytidyl-2-C-methyl-D-erythritol 2-phosphate (CDP-ME2P) to 2-C-methyl-D-erythritol 2,4-cyclodiphosphate (ME-CPP) with a corresponding release of cytidine 5-monophosphate (CMP). The polypeptide is 2-C-methyl-D-erythritol 2,4-cyclodiphosphate synthase (Paraburkholderia phymatum (strain DSM 17167 / CIP 108236 / LMG 21445 / STM815) (Burkholderia phymatum)).